Here is a 118-residue protein sequence, read N- to C-terminus: Ribosome-binding factor A (118 aa).

This sequence belongs to the RbfA family. Monomer. Binds 30S ribosomal subunits, but not 50S ribosomal subunits or 70S ribosomes.

The protein localises to the cytoplasm. Its function is as follows. One of several proteins that assist in the late maturation steps of the functional core of the 30S ribosomal subunit. Associates with free 30S ribosomal subunits (but not with 30S subunits that are part of 70S ribosomes or polysomes). Required for efficient processing of 16S rRNA. May interact with the 5'-terminal helix region of 16S rRNA. The sequence is that of Ribosome-binding factor A from Shouchella clausii (strain KSM-K16) (Alkalihalobacillus clausii).